The following is a 350-amino-acid chain: C5a anaphylatoxin chemotactic receptor 1 (350 aa).

Residues 1-37 lie on the Extracellular side of the membrane; it reads MDSFNYTTPDYGHYDDKDTLDLNTPVDKTSNTLRVPD. An N-linked (GlcNAc...) asparagine glycan is attached at asparagine 5. The required for CHIPS binding stretch occupies residues 10–18; it reads DYGHYDDKD. Sulfotyrosine is present on residues tyrosine 11 and tyrosine 14. An involved in C5a binding region spans residues 21 to 30; that stretch reads DLNTPVDKTS. A helical transmembrane segment spans residues 38–64; it reads ILALVIFAVVFLVGVLGNALVVWVTAF. The Cytoplasmic portion of the chain corresponds to 65–69; sequence EAKRT. Residues 70-93 form a helical membrane-spanning segment; the sequence is INAIWFLNLAVADFLSCLALPILF. Over 94 to 110 the chain is Extracellular; the sequence is TSIVQHHHWPFGGAACS. Cysteine 109 and cysteine 188 are disulfide-bonded. Residues 111–132 traverse the membrane as a helical segment; it reads ILPSLILLNMYASILLLATISA. The Cytoplasmic segment spans residues 133-153; the sequence is DRFLLVFKPIWCQNFRGAGLA. Residues 154–174 form a helical membrane-spanning segment; the sequence is WIACAVAWGLALLLTIPSFLY. Over 175–200 the chain is Extracellular; the sequence is RVVREEYFPPKVLCGVDYSHDKRRER. The helical transmembrane segment at 201–226 threads the bilayer; it reads AVAIVRLVLGFLWPLLTLTICYTFIL. Residues 227–242 are Cytoplasmic-facing; sequence LRTWSRRATRSTKTLK. Residues 243–265 form a helical membrane-spanning segment; it reads VVVAVVASFFIFWLPYQVTGIMM. At 266–282 the chain is on the extracellular side; the sequence is SFLEPSSPTFLLLKKLD. The helical transmembrane segment at 283-303 threads the bilayer; the sequence is SLCVSFAYINCCINPIIYVVA. The Cytoplasmic portion of the chain corresponds to 304-350; it reads GQGFQGRLRKSLPSLLRNVLTEESVVRESKSFTRSTVDTMAQKTQAV. Serine 314, serine 317, serine 327, serine 332, serine 334, and serine 338 each carry phosphoserine.

Belongs to the G-protein coupled receptor 1 family. In terms of assembly, homodimer. May also form higher-order oligomers. Interacts (when phosphorylated) with ARRB1 and ARRB2; the interaction is associated with internalization of C5aR. Interacts (via N-terminal domain) with S.aureus chemotaxis inhibitory protein (CHIPS); the interaction blocks the receptor and may thus inhibit the immune response. Sulfation plays a critical role in the association of C5aR with C5a, but no significant role in the ability of the receptor to transduce a signal and mobilize calcium in response to a small a small peptide agonist. Sulfation at Tyr-14 is important for CHIPS binding. Post-translationally, phosphorylated on serine residues in response to C5a binding, resulting in internalization of the receptor and short-term desensitization to the ligand. The key residues involved in this process are Ser-334 and Ser-338.

The protein localises to the cell membrane. The protein resides in the cytoplasmic vesicle. Its function is as follows. Receptor for the chemotactic and inflammatory peptide anaphylatoxin C5a. The ligand interacts with at least two sites on the receptor: a high-affinity site on the extracellular N-terminus, and a second site in the transmembrane region which activates downstream signaling events. Receptor activation stimulates chemotaxis, granule enzyme release, intracellular calcium release and superoxide anion production. In Homo sapiens (Human), this protein is C5a anaphylatoxin chemotactic receptor 1 (C5AR1).